The sequence spans 278 residues: Formamidopyrimidine-DNA glycosylase (278 aa).

The active-site Schiff-base intermediate with DNA is the Pro2. The Proton donor role is filled by Glu3. The active-site Proton donor; for beta-elimination activity is the Lys57. DNA contacts are provided by His90, Arg109, and Lys150. The segment at 235 to 269 (QVYGRAGEPCRQCGHPIEIAKHGQRSTFFCRHCQF) adopts an FPG-type zinc-finger fold. Arg259 (proton donor; for delta-elimination activity) is an active-site residue.

Belongs to the FPG family. As to quaternary structure, monomer. Zn(2+) serves as cofactor.

It carries out the reaction Hydrolysis of DNA containing ring-opened 7-methylguanine residues, releasing 2,6-diamino-4-hydroxy-5-(N-methyl)formamidopyrimidine.. It catalyses the reaction 2'-deoxyribonucleotide-(2'-deoxyribose 5'-phosphate)-2'-deoxyribonucleotide-DNA = a 3'-end 2'-deoxyribonucleotide-(2,3-dehydro-2,3-deoxyribose 5'-phosphate)-DNA + a 5'-end 5'-phospho-2'-deoxyribonucleoside-DNA + H(+). Involved in base excision repair of DNA damaged by oxidation or by mutagenic agents. Acts as a DNA glycosylase that recognizes and removes damaged bases. Has a preference for oxidized purines, such as 7,8-dihydro-8-oxoguanine (8-oxoG). Has AP (apurinic/apyrimidinic) lyase activity and introduces nicks in the DNA strand. Cleaves the DNA backbone by beta-delta elimination to generate a single-strand break at the site of the removed base with both 3'- and 5'-phosphates. This chain is Formamidopyrimidine-DNA glycosylase, found in Yersinia pestis (strain Pestoides F).